Here is a 141-residue protein sequence, read N- to C-terminus: Galactose-6-phosphate isomerase subunit LacA 1 (141 aa).

This sequence belongs to the LacAB/RpiB family. As to quaternary structure, heteromultimeric protein consisting of LacA and LacB.

The enzyme catalyses aldehydo-D-galactose 6-phosphate = keto-D-tagatose 6-phosphate. It functions in the pathway carbohydrate metabolism; D-galactose 6-phosphate degradation; D-tagatose 6-phosphate from D-galactose 6-phosphate: step 1/1. In Streptococcus agalactiae serotype III (strain NEM316), this protein is Galactose-6-phosphate isomerase subunit LacA 1.